The chain runs to 1228 residues: ABC transporter B family member 16 (1228 aa).

A run of 6 helical transmembrane segments spans residues 22 to 42, 69 to 89, 145 to 167, 171 to 193, 251 to 271, and 283 to 303; these read MGLG…LFFI, LAML…GYCW, LPNI…MLLW, IVGF…ALIG, GIAI…TWYG, and GTVS…GQAL. The ABC transmembrane type-1 1 domain maps to 22-311; that stretch reads MGLGLIGAVG…ALSNLKYFSE (290 aa). One can recognise an ABC transporter 1 domain in the interval 346 to 582; sequence VEFNNVKCKY…DGKYTSLVRL (237 aa). 381–388 provides a ligand contact to ATP; it reads GGSGSGKS. N-linked (GlcNAc...) asparagine glycans are attached at residues Asn-529, Asn-593, and Asn-628. Positions 658 to 946 constitute an ABC transmembrane type-1 2 domain; it reads ALCGCLSASL…AGTMTTDLAK (289 aa). 2 helical membrane passes run 667–687 and 700–720; these read LGGA…SVFF and IYVL…ISQQ. N-linked (GlcNAc...) asparagine glycosylation is present at Asn-755. Transmembrane regions (helical) follow at residues 781 to 801 and 805 to 825; these read LLVQ…VIAW and IVMI…RVLL. Asn-827 carries N-linked (GlcNAc...) asparagine glycosylation. The next 2 membrane-spanning stretches (helical) occupy residues 881-901 and 920-940; these read SWLA…TSAL and FFEL…AGTM. In terms of domain architecture, ABC transporter 2 spans 981–1219; the sequence is ITFLNVDFAY…GPTGSYFSLV (239 aa). Asn-1001 carries N-linked (GlcNAc...) asparagine glycosylation. ATP is bound at residue 1016–1023; the sequence is GPSRSGKS.

The protein belongs to the ABC transporter superfamily. ABCB family. Multidrug resistance exporter (TC 3.A.1.201) subfamily.

It is found in the membrane. The polypeptide is ABC transporter B family member 16 (ABCB16) (Arabidopsis thaliana (Mouse-ear cress)).